Consider the following 327-residue polypeptide: BarH-like 1 homeobox protein (327 aa).

Disordered stretches follow at residues 1-90, 112-184, and 305-327; these read MEGS…AQSR, APYS…ARTA, and GASE…AQPR. The segment covering 33 to 54 has biased composition (low complexity); it reads RSPLELSPRSESSSDCSSPASP. Positions 79 to 90 are enriched in polar residues; that stretch reads QPGQLSAPAQSR. Basic and acidic residues-rich tracts occupy residues 133–143 and 152–166; these read AAEDFRDKLDK and SEYK…EISS. The homeobox DNA-binding region spans 178–237; it reads PRKARTAFTDHQLAQLERSFERQKYLSVQDRMELAASLNLTDTQVKTWYQNRRTKWKRQT. Residues 316–327 show a composition bias toward low complexity; it reads LAGVLPRAAQPR.

It belongs to the BAR homeobox family.

The protein localises to the nucleus. The polypeptide is BarH-like 1 homeobox protein (BARHL1) (Homo sapiens (Human)).